The sequence spans 202 residues: MTAESTRKASIERSTKETSIAVSVDLDGVGKFDITTGVGFFDHMLEQLSRHSLIDMRVMAKGDLHIDDHHTVEDTGITLGQAVAKALGERRGIVRYASLDLAMDDTLTGAAVDVSGRAFLVWNVNFTTAKIGTFDTELVREFFQAFAMNAGITLHINNHYGANNHHIAESTFKAVARVLRAALETDPRQKDAIPSTKGSLKG.

It belongs to the imidazoleglycerol-phosphate dehydratase family.

It localises to the cytoplasm. The enzyme catalyses D-erythro-1-(imidazol-4-yl)glycerol 3-phosphate = 3-(imidazol-4-yl)-2-oxopropyl phosphate + H2O. Its pathway is amino-acid biosynthesis; L-histidine biosynthesis; L-histidine from 5-phospho-alpha-D-ribose 1-diphosphate: step 6/9. In Brucella suis (strain ATCC 23445 / NCTC 10510), this protein is Imidazoleglycerol-phosphate dehydratase.